A 548-amino-acid chain; its full sequence is Chaperonin GroEL (548 aa).

Residues 29–32, K50, 86–90, G414, 478–480, and D494 contribute to the ATP site; these read TMGP, DGTTT, and NAA.

Belongs to the chaperonin (HSP60) family. As to quaternary structure, forms a cylinder of 14 subunits composed of two heptameric rings stacked back-to-back. Interacts with the co-chaperonin GroES.

It is found in the cytoplasm. It catalyses the reaction ATP + H2O + a folded polypeptide = ADP + phosphate + an unfolded polypeptide.. Functionally, together with its co-chaperonin GroES, plays an essential role in assisting protein folding. The GroEL-GroES system forms a nano-cage that allows encapsulation of the non-native substrate proteins and provides a physical environment optimized to promote and accelerate protein folding. The sequence is that of Chaperonin GroEL from Legionella pneumophila (strain Paris).